The primary structure comprises 889 residues: Cytoplasmic aconitate hydratase (889 aa).

Residues Q86 and 205–207 each bind substrate; that span reads DSH. 3 residues coordinate [4Fe-4S] cluster: C437, C503, and C506. Residues R536 and R541 each contribute to the substrate site. T628 carries the post-translational modification Phosphothreonine. Residues R699 and 779 to 780 each bind substrate; that span reads SR.

This sequence belongs to the aconitase/IPM isomerase family. Interacts (when associated with the 4Fe-4S) with FBXL5. Interacts with frataxin(81-210). Requires [4Fe-4S] cluster as cofactor.

It localises to the cytoplasm. The protein resides in the cytosol. The catalysed reaction is citrate = D-threo-isocitrate. Functionally, bifunctional iron sensor that switches between 2 activities depending on iron availability. Iron deprivation, promotes its mRNA binding activity through which it regulates the expression of genes involved in iron uptake, sequestration and utilization. Binds to iron-responsive elements (IRES) in the untranslated region of target mRNAs preventing for instance the translation of ferritin and aminolevulinic acid synthase and stabilizing the transferrin receptor mRNA. Its function is as follows. Conversely, when cellular iron levels are high, binds a 4Fe-4S cluster which precludes RNA binding activity and promotes the aconitase activity, the isomerization of citrate to isocitrate via cis-aconitate. In Homo sapiens (Human), this protein is Cytoplasmic aconitate hydratase (ACO1).